A 156-amino-acid chain; its full sequence is Transcription elongation factor GreA (156 aa).

Belongs to the GreA/GreB family.

Functionally, necessary for efficient RNA polymerase transcription elongation past template-encoded arresting sites. The arresting sites in DNA have the property of trapping a certain fraction of elongating RNA polymerases that pass through, resulting in locked ternary complexes. Cleavage of the nascent transcript by cleavage factors such as GreA or GreB allows the resumption of elongation from the new 3'terminus. GreA releases sequences of 2 to 3 nucleotides. This is Transcription elongation factor GreA from Thermomicrobium roseum (strain ATCC 27502 / DSM 5159 / P-2).